The chain runs to 346 residues: Heterogeneous nuclear ribonucleoprotein A2 homolog 1 (346 aa).

RRM domains lie at 9 to 92 (RKLF…ESAK) and 100 to 179 (KKLF…LSKQ). Disordered regions lie at residues 182–217 (QDVQNTRNNRGGNFGFGDSRGGGNFGSGPGGNFRGG) and 326–346 (NYGPGNASGGNGGGYGGRNRY). Positions 193 to 217 (GNFGFGDSRGGGNFGSGPGGNFRGG) are enriched in gly residues. Positions 297 to 340 (QQSSNYGPMKSGGNFGGNRSMGGGPYGGGNYGPGNASGGNGGGY) are nuclear targeting sequence.

It is found in the nucleus. In terms of biological role, forms complexes (ribonucleosomes) with at least 20 other different hnRNP and heterogeneous nuclear RNA in the nucleus. In Xenopus laevis (African clawed frog), this protein is Heterogeneous nuclear ribonucleoprotein A2 homolog 1.